Consider the following 399-residue polypeptide: MAEEEENQELYIAENEVEEVIKDNDKLMDQGVTEDEAEQEQNDTMNNMVMDMSVQGFFEHKDSVFSVSINPVHSNLCASGGGDDLGYIWDITTGEQICQLTGHKDSIVAIDWSFDGTYIATGGMDSQVRLWKSSTGFEFITAFETVDEIVWLSWHPKGLFLAAGCNDGSIWMWSLPSGKVVQVMYGHTAPVNAGKFIPPGVGKRLATVDDSGTLIVWNPATGAPECRMSSDDHRFDPGNEETAAGWTSFDCNAEGNVLFLGGSSGKVKVVNINSSHILASLEAQTESVEAIALCTALPICACASVDGTVALYDSASLKFRKSLPHEQAVIDCKFLPNTPYLLTACADCVIRKWDVRSGQLLGEYTGHQEPILCMAITPDGKRVVTGSDDTELLVFDCEH.

WD repeat units follow at residues 59–99 (EHKD…QICQ), 102–141 (GHKD…EFIT), 144–185 (ETVD…QVMY), 187–227 (HTAP…PECR), 241–280 (ETAA…ILAS), 283–322 (AQTE…FRKS), 324–363 (PHEQ…LLGE), and 366–399 (GHQE…DCEH).

It is found in the cytoplasm. The protein resides in the nucleus. This is an uncharacterized protein from Schizosaccharomyces pombe (strain 972 / ATCC 24843) (Fission yeast).